Reading from the N-terminus, the 158-residue chain is Large ribosomal subunit protein uL16 (158 aa).

Belongs to the universal ribosomal protein uL16 family. In terms of assembly, part of the 50S ribosomal subunit.

Functionally, binds 23S rRNA and is also seen to make contacts with the A and possibly P site tRNAs. The protein is Large ribosomal subunit protein uL16 of Parasynechococcus marenigrum (strain WH8102).